Reading from the N-terminus, the 440-residue chain is D-serine dehydratase (440 aa).

Lysine 116 bears the N6-(pyridoxal phosphate)lysine mark.

It belongs to the serine/threonine dehydratase family. DsdA subfamily. In terms of assembly, monomer. Pyridoxal 5'-phosphate is required as a cofactor.

It carries out the reaction D-serine = pyruvate + NH4(+). This chain is D-serine dehydratase, found in Salmonella dublin (strain CT_02021853).